Reading from the N-terminus, the 361-residue chain is Phosphoserine aminotransferase (361 aa).

R43 contributes to the L-glutamate binding site. Pyridoxal 5'-phosphate-binding positions include 77–78 (AS), W103, T153, D173, and Q196. K197 is subject to N6-(pyridoxal phosphate)lysine. 238–239 (NT) is a binding site for pyridoxal 5'-phosphate.

This sequence belongs to the class-V pyridoxal-phosphate-dependent aminotransferase family. SerC subfamily. In terms of assembly, homodimer. The cofactor is pyridoxal 5'-phosphate.

It localises to the cytoplasm. It carries out the reaction O-phospho-L-serine + 2-oxoglutarate = 3-phosphooxypyruvate + L-glutamate. It catalyses the reaction 4-(phosphooxy)-L-threonine + 2-oxoglutarate = (R)-3-hydroxy-2-oxo-4-phosphooxybutanoate + L-glutamate. Its pathway is amino-acid biosynthesis; L-serine biosynthesis; L-serine from 3-phospho-D-glycerate: step 2/3. It participates in cofactor biosynthesis; pyridoxine 5'-phosphate biosynthesis; pyridoxine 5'-phosphate from D-erythrose 4-phosphate: step 3/5. Catalyzes the reversible conversion of 3-phosphohydroxypyruvate to phosphoserine and of 3-hydroxy-2-oxo-4-phosphonooxybutanoate to phosphohydroxythreonine. This chain is Phosphoserine aminotransferase, found in Pseudomonas putida (strain ATCC 47054 / DSM 6125 / CFBP 8728 / NCIMB 11950 / KT2440).